We begin with the raw amino-acid sequence, 62 residues long: MTIAFQLAVFALIATSSLLLISVPVVFASPEGWSSNKNVVFSGTSLWIGLVFLVGILNSLIS.

2 helical membrane passes run 8–28 (AVFA…VVFA) and 41–61 (FSGT…NSLI).

This sequence belongs to the PsbZ family. In terms of assembly, PSII is composed of 1 copy each of membrane proteins PsbA, PsbB, PsbC, PsbD, PsbE, PsbF, PsbH, PsbI, PsbJ, PsbK, PsbL, PsbM, PsbT, PsbY, PsbZ, Psb30/Ycf12, at least 3 peripheral proteins of the oxygen-evolving complex and a large number of cofactors. It forms dimeric complexes.

It localises to the plastid. Its subcellular location is the chloroplast thylakoid membrane. In terms of biological role, may control the interaction of photosystem II (PSII) cores with the light-harvesting antenna, regulates electron flow through the 2 photosystem reaction centers. PSII is a light-driven water plastoquinone oxidoreductase, using light energy to abstract electrons from H(2)O, generating a proton gradient subsequently used for ATP formation. The polypeptide is Photosystem II reaction center protein Z (Oenothera elata subsp. hookeri (Hooker's evening primrose)).